The following is a 130-amino-acid chain: Small ribosomal subunit protein uS9 (130 aa).

The segment at 109–130 (RMKERKKYGLKGARRAPQFSKR) is disordered. The segment covering 111 to 130 (KERKKYGLKGARRAPQFSKR) has biased composition (basic residues).

The protein belongs to the universal ribosomal protein uS9 family.

In Alkaliphilus metalliredigens (strain QYMF), this protein is Small ribosomal subunit protein uS9.